We begin with the raw amino-acid sequence, 219 residues long: Orotate phosphoribosyltransferase (219 aa).

K26 contacts 5-phospho-alpha-D-ribose 1-diphosphate. F34–F35 contacts orotate. Residues Y72 to K73, R98, K99, K102, H104, and D124 to A132 contribute to the 5-phospho-alpha-D-ribose 1-diphosphate site. Orotate contacts are provided by T128 and R156.

This sequence belongs to the purine/pyrimidine phosphoribosyltransferase family. PyrE subfamily. As to quaternary structure, homodimer. Mg(2+) is required as a cofactor.

The enzyme catalyses orotidine 5'-phosphate + diphosphate = orotate + 5-phospho-alpha-D-ribose 1-diphosphate. It participates in pyrimidine metabolism; UMP biosynthesis via de novo pathway; UMP from orotate: step 1/2. Its function is as follows. Catalyzes the transfer of a ribosyl phosphate group from 5-phosphoribose 1-diphosphate to orotate, leading to the formation of orotidine monophosphate (OMP). This Stenotrophomonas maltophilia (strain R551-3) protein is Orotate phosphoribosyltransferase.